A 43-amino-acid chain; its full sequence is Gene 75 protein (43 aa).

The polypeptide is Gene 75 protein (75) (Mycobacterium (Mycobacteriophage L5)).